The sequence spans 272 residues: Hemin import ATP-binding protein HmuV (272 aa).

An ABC transporter domain is found at 2-255 (LNAEHLHVAR…DLIERCYGFR (254 aa)). 34 to 41 (GRNGAGKS) contributes to the ATP binding site.

It belongs to the ABC transporter superfamily. Heme (hemin) importer (TC 3.A.1.14.5) family. In terms of assembly, the complex is composed of two ATP-binding proteins (HmuV), two transmembrane proteins (HmuU) and a solute-binding protein (HmuT).

Its subcellular location is the cell inner membrane. In terms of biological role, part of the ABC transporter complex HmuTUV involved in hemin import. Responsible for energy coupling to the transport system. The sequence is that of Hemin import ATP-binding protein HmuV from Burkholderia thailandensis (strain ATCC 700388 / DSM 13276 / CCUG 48851 / CIP 106301 / E264).